Consider the following 386-residue polypeptide: Succinate--CoA ligase [ADP-forming] subunit beta (386 aa).

An ATP-grasp domain is found at 9 to 244 (KELFANYGVP…LDEEEPLEVE (236 aa)). Residues Lys46, 53 to 55 (GRG), Glu99, Leu102, and Glu107 contribute to the ATP site. Residues Asn199 and Asp213 each contribute to the Mg(2+) site. Residues Asn264 and 321 to 323 (GIL) contribute to the substrate site.

The protein belongs to the succinate/malate CoA ligase beta subunit family. In terms of assembly, heterotetramer of two alpha and two beta subunits. Mg(2+) serves as cofactor.

It catalyses the reaction succinate + ATP + CoA = succinyl-CoA + ADP + phosphate. The enzyme catalyses GTP + succinate + CoA = succinyl-CoA + GDP + phosphate. The protein operates within carbohydrate metabolism; tricarboxylic acid cycle; succinate from succinyl-CoA (ligase route): step 1/1. Functionally, succinyl-CoA synthetase functions in the citric acid cycle (TCA), coupling the hydrolysis of succinyl-CoA to the synthesis of either ATP or GTP and thus represents the only step of substrate-level phosphorylation in the TCA. The beta subunit provides nucleotide specificity of the enzyme and binds the substrate succinate, while the binding sites for coenzyme A and phosphate are found in the alpha subunit. The chain is Succinate--CoA ligase [ADP-forming] subunit beta from Desulfatibacillum aliphaticivorans.